We begin with the raw amino-acid sequence, 305 residues long: Methionyl-tRNA formyltransferase (305 aa).

Residue 111–114 (SLLP) coordinates (6S)-5,6,7,8-tetrahydrofolate.

This sequence belongs to the Fmt family.

It carries out the reaction L-methionyl-tRNA(fMet) + (6R)-10-formyltetrahydrofolate = N-formyl-L-methionyl-tRNA(fMet) + (6S)-5,6,7,8-tetrahydrofolate + H(+). Functionally, attaches a formyl group to the free amino group of methionyl-tRNA(fMet). The formyl group appears to play a dual role in the initiator identity of N-formylmethionyl-tRNA by promoting its recognition by IF2 and preventing the misappropriation of this tRNA by the elongation apparatus. This is Methionyl-tRNA formyltransferase from Campylobacter jejuni subsp. jejuni serotype O:23/36 (strain 81-176).